The primary structure comprises 964 residues: Glycine dehydrogenase (decarboxylating) (964 aa).

Polar residues predominate over residues 1-11 (MNSTLQNQTKT). Residues 1 to 21 (MNSTLQNQTKTNLEKVGTDPL) are disordered. An N6-(pyridoxal phosphate)lysine modification is found at Lys-713.

This sequence belongs to the GcvP family. The glycine cleavage system is composed of four proteins: P, T, L and H. Requires pyridoxal 5'-phosphate as cofactor.

It carries out the reaction N(6)-[(R)-lipoyl]-L-lysyl-[glycine-cleavage complex H protein] + glycine + H(+) = N(6)-[(R)-S(8)-aminomethyldihydrolipoyl]-L-lysyl-[glycine-cleavage complex H protein] + CO2. In terms of biological role, the glycine cleavage system catalyzes the degradation of glycine. The P protein binds the alpha-amino group of glycine through its pyridoxal phosphate cofactor; CO(2) is released and the remaining methylamine moiety is then transferred to the lipoamide cofactor of the H protein. The sequence is that of Glycine dehydrogenase (decarboxylating) from Leptospira interrogans serogroup Icterohaemorrhagiae serovar Lai (strain 56601).